The following is an 87-amino-acid chain: uncharacterized protein (87 aa).

The next 2 helical transmembrane spans lie at 7–27 (LFFI…LYSI) and 64–84 (GINI…IPLF).

The protein resides in the membrane. This is an uncharacterized protein from Schizosaccharomyces pombe (strain 972 / ATCC 24843) (Fission yeast).